We begin with the raw amino-acid sequence, 572 residues long: Proline--tRNA ligase (572 aa).

Belongs to the class-II aminoacyl-tRNA synthetase family. ProS type 1 subfamily. As to quaternary structure, homodimer. May form a tertiary complex with YbaK and t-RNA(Pro).

It localises to the cytoplasm. The enzyme catalyses tRNA(Pro) + L-proline + ATP = L-prolyl-tRNA(Pro) + AMP + diphosphate. In terms of biological role, catalyzes the attachment of proline to tRNA(Pro) in a two-step reaction: proline is first activated by ATP to form Pro-AMP and then transferred to the acceptor end of tRNA(Pro). As ProRS can inadvertently accommodate and process non-cognate amino acids such as alanine and cysteine, to avoid such errors it has two additional distinct editing activities against alanine. One activity is designated as 'pretransfer' editing and involves the tRNA(Pro)-independent hydrolysis of activated Ala-AMP. The other activity is designated 'posttransfer' editing and involves deacylation of mischarged Ala-tRNA(Pro). The misacylated Cys-tRNA(Pro) is not edited by ProRS, but is probably edited in trans by YbaK. This Haemophilus influenzae (strain ATCC 51907 / DSM 11121 / KW20 / Rd) protein is Proline--tRNA ligase.